The chain runs to 829 residues: Venom phosphodiesterase CdcPDE (829 aa).

SMB domains are found at residues 8-51 and 52-96; these read PQVS…VLPT and QSWS…GETS. Cystine bridges form between Cys12/Cys16, Cys12/Cys29, Cys16/Cys47, Cys27/Cys29, Cys27/Cys40, Cys33/Cys39, Cys40/Cys47, Cys56/Cys61, Cys56/Cys73, Cys61/Cys91, Cys71/Cys73, Cys71/Cys84, Cys77/Cys83, Cys84/Cys91, Cys102/Cys148, and Cys110/Cys322. N-linked (GlcNAc...) asparagine glycosylation occurs at Asn17. The short motif at 36–38 is the Cell attachment site element; the sequence is RQA. Asp125 and Thr163 together coordinate a divalent metal cation. Thr163 serves as the catalytic AMP-threonine intermediate. N-linked (GlcNAc...) asparagine glycosylation is found at Asn194 and Asn237. Lys249 contributes to the AMP binding site. A divalent metal cation-binding residues include Asp283, His287, Asp330, and His331. His287 contacts AMP. Cystine bridges form between Cys338–Cys435, Cys386–Cys771, Cys519–Cys577, Cys532–Cys632, Cys534–Cys617, and Cys740–Cys750. N-linked (GlcNAc...) asparagine glycosylation is present at Asn383. A divalent metal cation is bound at residue His440. 2 N-linked (GlcNAc...) asparagine glycosylation sites follow: Asn572 and Asn652.

It belongs to the nucleotide pyrophosphatase/phosphodiesterase family. In terms of assembly, monomer. Requires a divalent metal cation as cofactor. Post-translationally, N-glycosylated. Glycosylation counts for an increased mass of ~9%. In terms of processing, contains 16 disulfide bonds. In terms of tissue distribution, expressed by venom gland.

Its subcellular location is the secreted. The catalysed reaction is ADP + H2O = AMP + phosphate + H(+). Functionally, hydrolyzes ADP with high activity. Shows weak or no activity on 5'-AMP, 5'-GMP, 3'-AMP, ATP, cAMP, and cGMP. Is devoid of monophosphatase and proteinase activities. Inhibits ADP-induced platelet aggregation and is cytotoxic to human keratinocytes. Kinetic parameters indicated a higher affinity for the substrate bis(p-nitrophenyl) phosphate compared to others snake venom PDEs. Is recognized by the crotalid antivenom produced by the Instituto Butantan. The polypeptide is Venom phosphodiesterase CdcPDE (Crotalus durissus collilineatus (Brazilian rattlesnake)).